The chain runs to 210 residues: Proteasome subunit beta (210 aa).

A propeptide spans M1–G9 (removed in mature form; by autocatalysis). Residue T10 is the Nucleophile of the active site.

It belongs to the peptidase T1B family. The 20S proteasome core is composed of 14 alpha and 14 beta subunits that assemble into four stacked heptameric rings, resulting in a barrel-shaped structure. The two inner rings, each composed of seven catalytic beta subunits, are sandwiched by two outer rings, each composed of seven alpha subunits. The catalytic chamber with the active sites is on the inside of the barrel. Has a gated structure, the ends of the cylinder being occluded by the N-termini of the alpha-subunits. Is capped at one or both ends by the proteasome regulatory ATPase, PAN.

It is found in the cytoplasm. The catalysed reaction is Cleavage of peptide bonds with very broad specificity.. Its activity is regulated as follows. The formation of the proteasomal ATPase PAN-20S proteasome complex, via the docking of the C-termini of PAN into the intersubunit pockets in the alpha-rings, triggers opening of the gate for substrate entry. Interconversion between the open-gate and close-gate conformations leads to a dynamic regulation of the 20S proteasome proteolysis activity. Component of the proteasome core, a large protease complex with broad specificity involved in protein degradation. This is Proteasome subunit beta from Methanosarcina mazei (strain ATCC BAA-159 / DSM 3647 / Goe1 / Go1 / JCM 11833 / OCM 88) (Methanosarcina frisia).